A 137-amino-acid polypeptide reads, in one-letter code: Large ribosomal subunit protein uL16 (137 aa).

This sequence belongs to the universal ribosomal protein uL16 family. Part of the 50S ribosomal subunit.

In terms of biological role, binds 23S rRNA and is also seen to make contacts with the A and possibly P site tRNAs. This is Large ribosomal subunit protein uL16 from Cereibacter sphaeroides (strain ATCC 17029 / ATH 2.4.9) (Rhodobacter sphaeroides).